Reading from the N-terminus, the 393-residue chain is UDP-sulfoquinovose synthase (393 aa).

NAD(+) is bound by residues 31–35 (DNLST), 74–75 (DI), Arg-100, and Asn-118. Substrate is bound at residue Arg-100. The substrate site is built by Thr-144 and Tyr-182. Thr-144 is an active-site residue. Residues Tyr-182 and Lys-186 each coordinate NAD(+). Tyr-182 acts as the Proton acceptor in catalysis. Lys-186 is a catalytic residue. Residue Gln-209 coordinates substrate. Val-212 contacts NAD(+). Residues 238–241 (VVNR), 253–255 (TVY), and 326–328 (RVE) each bind substrate.

This sequence belongs to the NAD(P)-dependent epimerase/dehydratase family. Requires NAD(+) as cofactor.

The catalysed reaction is sulfite + UDP-alpha-D-glucose + H(+) = UDP-alpha-D-6-sulfoquinovose + H2O. Catalyzes the biosynthesis of UDP-sulfoquinovose by the transfer of sulfite to UDP-glucose. Important for the assembly of the S-layer N-glycans. The reaction probably occurs through an NAD(+)-dependent oxidation/dehydration/enolization/sulfite addition process. In vitro, in the absence of sulfite, UDP-D-glucose is converted via UDP-4-keto-D-glucose to UDP-D-glucose-5,6-ene. This is UDP-sulfoquinovose synthase from Sulfolobus acidocaldarius (strain ATCC 33909 / DSM 639 / JCM 8929 / NBRC 15157 / NCIMB 11770).